A 271-amino-acid chain; its full sequence is 60 kDa heat shock protein, mitochondrial (271 aa).

2 positions are modified to phosphoserine: Ser-30 and Ser-33. 50–54 (DGTTT) serves as a coordination point for ATP. Lys-83 bears the N6-acetyllysine mark. Lys-84, Lys-97, and Lys-112 each carry N6-acetyllysine; alternate. N6-succinyllysine; alternate is present on residues Lys-84, Lys-97, and Lys-112. Position 125 is an N6-acetyllysine (Lys-125). Lys-126 carries the N6-acetyllysine; alternate modification. Lys-126 is subject to N6-succinyllysine; alternate. Lys-145 bears the N6-acetyllysine mark. Lys-175 carries the N6-succinyllysine modification. Residues Lys-188 and Lys-237 each carry the N6-acetyllysine modification. Gly-257 is a binding site for ATP. Residue Lys-270 is modified to N6-acetyllysine.

The protein belongs to the chaperonin (HSP60) family. Homoheptamer arranged in a ring structure. The functional units of these chaperonins consist of heptameric rings of the large subunit Hsp60, which function as a back-to-back double ring. Interacts with 2 heptameric Hsp10 rings to form the symmetrical football complex. Interacts with HRAS. Interacts with ATAD3A. Interacts with ETFBKMT and EEF1AKMT3. Interacts with MFHAS1. Detected at higher levels in caput epididymal spermatazoa than in cauda epididymal spermatazoa (at protein level).

Its subcellular location is the mitochondrion matrix. The catalysed reaction is ATP + H2O + a folded polypeptide = ADP + phosphate + an unfolded polypeptide.. Functionally, chaperonin implicated in mitochondrial protein import and macromolecular assembly. Together with Hsp10, facilitates the correct folding of imported proteins. May also prevent misfolding and promote the refolding and proper assembly of unfolded polypeptides generated under stress conditions in the mitochondrial matrix. The functional units of these chaperonins consist of heptameric rings of the large subunit Hsp60, which function as a back-to-back double ring. In a cyclic reaction, Hsp60 ring complexes bind one unfolded substrate protein per ring, followed by the binding of ATP and association with 2 heptameric rings of the co-chaperonin Hsp10. This leads to sequestration of the substrate protein in the inner cavity of Hsp60 where, for a certain period of time, it can fold undisturbed by other cell components. Synchronous hydrolysis of ATP in all Hsp60 subunits results in the dissociation of the chaperonin rings and the release of ADP and the folded substrate protein. The polypeptide is 60 kDa heat shock protein, mitochondrial (Mesocricetus auratus (Golden hamster)).